The chain runs to 170 residues: MKILVIQGPNLNMLGHRDPRLYGMVTLDQIHEIMQTFVKQGNLDVELEFFQTNFEGEIIDKIQESVGSDYEGIIINPGAFSHTSIAIADAIMLAGKPVIEVHLTNIQAREEFRKNSYTGAACGGVIMGFGPLGYNMALMAMVNILAEMKAFQEAQKNNPNNPNNPINNQK.

Y22 (proton acceptor) is an active-site residue. Residues N76, H82, and D89 each contribute to the substrate site. Catalysis depends on H102, which acts as the Proton donor. Residues 103–104 (LT) and R113 each bind substrate.

This sequence belongs to the type-II 3-dehydroquinase family. Homododecamer.

It carries out the reaction 3-dehydroquinate = 3-dehydroshikimate + H2O. The protein operates within metabolic intermediate biosynthesis; chorismate biosynthesis; chorismate from D-erythrose 4-phosphate and phosphoenolpyruvate: step 3/7. Catalyzes a trans-dehydration via an enolate intermediate. This Helicobacter pylori (strain J99 / ATCC 700824) (Campylobacter pylori J99) protein is 3-dehydroquinate dehydratase (aroQ).